The chain runs to 172 residues: 3-hydroxydecanoyl-[acyl-carrier-protein] dehydratase (172 aa).

The active site involves His71.

It belongs to the thioester dehydratase family. FabA subfamily. In terms of assembly, homodimer.

The protein localises to the cytoplasm. It catalyses the reaction a (3R)-hydroxyacyl-[ACP] = a (2E)-enoyl-[ACP] + H2O. The catalysed reaction is (3R)-hydroxydecanoyl-[ACP] = (2E)-decenoyl-[ACP] + H2O. It carries out the reaction (2E)-decenoyl-[ACP] = (3Z)-decenoyl-[ACP]. It functions in the pathway lipid metabolism; fatty acid biosynthesis. In terms of biological role, necessary for the introduction of cis unsaturation into fatty acids. Catalyzes the dehydration of (3R)-3-hydroxydecanoyl-ACP to E-(2)-decenoyl-ACP and then its isomerization to Z-(3)-decenoyl-ACP. Can catalyze the dehydratase reaction for beta-hydroxyacyl-ACPs with saturated chain lengths up to 16:0, being most active on intermediate chain length. This chain is 3-hydroxydecanoyl-[acyl-carrier-protein] dehydratase, found in Yersinia pseudotuberculosis serotype O:1b (strain IP 31758).